The chain runs to 357 residues: Mitogen-activated protein kinase kinase SIPKK (357 aa).

Positions 70–330 (FEAVKVIGKG…ANELMRHPFI (261 aa)) constitute a Protein kinase domain. ATP contacts are provided by residues 76–84 (IGKGNGGIV) and Lys99. The active-site Proton acceptor is the Asp192.

The protein belongs to the protein kinase superfamily. STE Ser/Thr protein kinase family. MAP kinase kinase subfamily. As to quaternary structure, interacts with SIPK.

The enzyme catalyses L-tyrosyl-[protein] + ATP = O-phospho-L-tyrosyl-[protein] + ADP + H(+). It catalyses the reaction L-seryl-[protein] + ATP = O-phospho-L-seryl-[protein] + ADP + H(+). The catalysed reaction is L-threonyl-[protein] + ATP = O-phospho-L-threonyl-[protein] + ADP + H(+). Functionally, phosphorylates myelin basic protein (MBP) in vitro. May be involved in disease resistance. This Nicotiana tabacum (Common tobacco) protein is Mitogen-activated protein kinase kinase SIPKK.